A 219-amino-acid chain; its full sequence is Thymidylate kinase (219 aa).

10–17 (GLEGAGKT) contributes to the ATP binding site.

This sequence belongs to the thymidylate kinase family.

It carries out the reaction dTMP + ATP = dTDP + ADP. Functionally, phosphorylation of dTMP to form dTDP in both de novo and salvage pathways of dTTP synthesis. In Pectobacterium carotovorum subsp. carotovorum (strain PC1), this protein is Thymidylate kinase.